The sequence spans 130 residues: Small ribosomal subunit protein uS9 (130 aa).

It belongs to the universal ribosomal protein uS9 family.

The protein is Small ribosomal subunit protein uS9 of Thiobacillus denitrificans (strain ATCC 25259 / T1).